We begin with the raw amino-acid sequence, 183 residues long: 2-C-methyl-D-erythritol 2,4-cyclodiphosphate synthase (183 aa).

A divalent metal cation is bound by residues Asp10 and His12. Residues 10–12 and 38–39 contribute to the 4-CDP-2-C-methyl-D-erythritol 2-phosphate site; these read DVH and HS. Residue His46 coordinates a divalent metal cation. 4-CDP-2-C-methyl-D-erythritol 2-phosphate-binding positions include 60 to 62 and 65 to 69; these read DIG and FPDTD.

Belongs to the IspF family. In terms of assembly, homotrimer. Requires a divalent metal cation as cofactor.

The enzyme catalyses 4-CDP-2-C-methyl-D-erythritol 2-phosphate = 2-C-methyl-D-erythritol 2,4-cyclic diphosphate + CMP. It functions in the pathway isoprenoid biosynthesis; isopentenyl diphosphate biosynthesis via DXP pathway; isopentenyl diphosphate from 1-deoxy-D-xylulose 5-phosphate: step 4/6. Involved in the biosynthesis of isopentenyl diphosphate (IPP) and dimethylallyl diphosphate (DMAPP), two major building blocks of isoprenoid compounds. Catalyzes the conversion of 4-diphosphocytidyl-2-C-methyl-D-erythritol 2-phosphate (CDP-ME2P) to 2-C-methyl-D-erythritol 2,4-cyclodiphosphate (ME-CPP) with a corresponding release of cytidine 5-monophosphate (CMP). The chain is 2-C-methyl-D-erythritol 2,4-cyclodiphosphate synthase from Verminephrobacter eiseniae (strain EF01-2).